The chain runs to 129 residues: Ribonuclease P protein component (129 aa).

The protein belongs to the RnpA family. Consists of a catalytic RNA component (M1 or rnpB) and a protein subunit.

The enzyme catalyses Endonucleolytic cleavage of RNA, removing 5'-extranucleotides from tRNA precursor.. RNaseP catalyzes the removal of the 5'-leader sequence from pre-tRNA to produce the mature 5'-terminus. It can also cleave other RNA substrates such as 4.5S RNA. The protein component plays an auxiliary but essential role in vivo by binding to the 5'-leader sequence and broadening the substrate specificity of the ribozyme. The polypeptide is Ribonuclease P protein component (Prochlorococcus marinus (strain MIT 9515)).